The following is a 433-amino-acid chain: Pyrimidine-nucleoside phosphorylase (433 aa).

K81–S83 is a phosphate binding site. Residues G88 and T90 each coordinate K(+). Phosphate is bound by residues T92, K108–S110, and T120. Residues R168 and K187 each contribute to the substrate site. K(+) is bound by residues L243, A246, and E255.

This sequence belongs to the thymidine/pyrimidine-nucleoside phosphorylase family. Homodimer. It depends on K(+) as a cofactor.

It catalyses the reaction uridine + phosphate = alpha-D-ribose 1-phosphate + uracil. The enzyme catalyses thymidine + phosphate = 2-deoxy-alpha-D-ribose 1-phosphate + thymine. The catalysed reaction is 2'-deoxyuridine + phosphate = 2-deoxy-alpha-D-ribose 1-phosphate + uracil. Catalyzes phosphorolysis of the pyrimidine nucleosides uridine, thymidine and 2'-deoxyuridine with the formation of the corresponding pyrimidine base and ribose-1-phosphate. The protein is Pyrimidine-nucleoside phosphorylase (pdp) of Staphylococcus aureus (strain Mu50 / ATCC 700699).